The following is a 366-amino-acid chain: Putative type II methyltransferase M.MjaORF1200P (366 aa).

An SAM-dependent MTase C5-type domain is found at 5 to 366 (LKFIDLFCGC…IARVIKENLK (362 aa)). Cys-133 is a catalytic residue.

Belongs to the class I-like SAM-binding methyltransferase superfamily. C5-methyltransferase family.

It catalyses the reaction a 2'-deoxycytidine in DNA + S-adenosyl-L-methionine = a 5-methyl-2'-deoxycytidine in DNA + S-adenosyl-L-homocysteine + H(+). A putative methylase that probably protects DNA from cleavage by the MjaORF1200P endonuclease. This chain is Putative type II methyltransferase M.MjaORF1200P, found in Methanocaldococcus jannaschii (strain ATCC 43067 / DSM 2661 / JAL-1 / JCM 10045 / NBRC 100440) (Methanococcus jannaschii).